The chain runs to 269 residues: Regulatory protein RecX (269 aa).

This sequence belongs to the RecX family.

Its subcellular location is the cytoplasm. Functionally, modulates RecA activity. This chain is Regulatory protein RecX, found in Lactococcus lactis subsp. cremoris (strain SK11).